Reading from the N-terminus, the 382-residue chain is D-galactonate dehydratase (382 aa).

Asp183 is a Mg(2+) binding site. His185 acts as the Proton donor in catalysis. Mg(2+)-binding residues include Glu209 and Glu235. Catalysis depends on His285, which acts as the Proton acceptor. The segment at 361–382 (NENPPDWRNPVWRHSDGSIAEW) is disordered.

This sequence belongs to the mandelate racemase/muconate lactonizing enzyme family. GalD subfamily. Requires Mg(2+) as cofactor.

It carries out the reaction D-galactonate = 2-dehydro-3-deoxy-D-galactonate + H2O. It participates in carbohydrate acid metabolism; D-galactonate degradation; D-glyceraldehyde 3-phosphate and pyruvate from D-galactonate: step 1/3. Catalyzes the dehydration of D-galactonate to 2-keto-3-deoxy-D-galactonate. This is D-galactonate dehydratase from Xanthomonas euvesicatoria pv. vesicatoria (strain 85-10) (Xanthomonas campestris pv. vesicatoria).